The primary structure comprises 330 residues: Phosphate acyltransferase (330 aa).

This sequence belongs to the PlsX family. Homodimer. Probably interacts with PlsY.

It is found in the cytoplasm. The enzyme catalyses a fatty acyl-[ACP] + phosphate = an acyl phosphate + holo-[ACP]. It functions in the pathway lipid metabolism; phospholipid metabolism. Catalyzes the reversible formation of acyl-phosphate (acyl-PO(4)) from acyl-[acyl-carrier-protein] (acyl-ACP). This enzyme utilizes acyl-ACP as fatty acyl donor, but not acyl-CoA. The sequence is that of Phosphate acyltransferase from Bacillus cereus (strain G9842).